The following is a 224-amino-acid chain: MRLRNNANAPLYLKSQEQYIVNDQQLLKNDLAKVFKNPHLPLHIEIGMGKGDFIVENALHNPQINYLGIEKFPTVIVKAHKKALKHKLDNLAMICFDANAILDLLNSKSIDKIYLNFSDPWPKKRHAKKRLTNPYFLEKFAALLKDDGLIEFKTDNESLFHYTIYDVLLNDLTKYEILFLTYNLYALVNNVELLKNIPTEYEKKFVMQGQRIKKVSFRFLKKND.

Residues E45, E70, D97, and D119 each contribute to the S-adenosyl-L-methionine site. D119 is a catalytic residue. Substrate-binding positions include K123, D155, and T199–E202.

It belongs to the class I-like SAM-binding methyltransferase superfamily. TrmB family.

It catalyses the reaction guanosine(46) in tRNA + S-adenosyl-L-methionine = N(7)-methylguanosine(46) in tRNA + S-adenosyl-L-homocysteine. It functions in the pathway tRNA modification; N(7)-methylguanine-tRNA biosynthesis. Its function is as follows. Catalyzes the formation of N(7)-methylguanine at position 46 (m7G46) in tRNA. The protein is tRNA (guanine-N(7)-)-methyltransferase of Ureaplasma urealyticum serovar 10 (strain ATCC 33699 / Western).